The chain runs to 235 residues: tRNA (adenine(37)-N6)-methyltransferase (235 aa).

Residues 6 to 147 (FEQIGVIRSP…YLPFAESLPD (142 aa)) form the TsaA-like domain. Residues 23 to 25 (PRQ), 64 to 65 (HQ), Arg92, and 127 to 130 (VDGT) each bind S-adenosyl-L-methionine.

The protein belongs to the tRNA methyltransferase O family. As to quaternary structure, homodimer.

It catalyses the reaction N(6)-L-threonylcarbamoyladenosine(37) in tRNA + S-adenosyl-L-methionine = N(6)-methyl,N(6)-L-threonylcarbamoyladenosine(37) in tRNA + S-adenosyl-L-homocysteine + H(+). In terms of biological role, S-adenosyl-L-methionine-dependent methyltransferase responsible for the addition of the methyl group in the formation of N6-methyl-N6-threonylcarbamoyladenosine at position 37 (m(6)t(6)A37) of the tRNA anticodon loop of tRNA(Thr)(GGU) that read codons starting with adenosine. The methyl group of m(6)t(6)A37 appears to slightly improve the efficiency of the tRNA decoding ability. The polypeptide is tRNA (adenine(37)-N6)-methyltransferase (Escherichia coli (strain K12)).